A 940-amino-acid chain; its full sequence is MAGAAAAVAAGAAAGAAAAAGSVSAPGRASAPPPPPPVYCVCRQPYDVNRFMIECDVCKDWFHGSCVGVEEHHAVDIDLYHCPDCAALHGSSLMKKRRNWHRHDYTEVDDGSKPVQAGTRAFVKELRSRVFPSADEIIVKMHGSQLTQRYLEKHGFDVPIMVPKLDDLGLRLPSPAFSVMDVERYVGGDKVIDVIDVARQADSKMTLHNYVKYFMNPDRPKVLNVISLEFSDTKMSELVEVPDIARKLSWVENYWPDDSVFPKPFVQKYCLMGVQDSYTDFHIDFGGTSVWYHVLWGEKIFYLIKPTNENLALYESWSSSVTQSEVFFGDKVDKCYKCVVKQGHTLFVPTGWIHAVLTSQDCMAFGGNFLHNLNIGMQLRCYEMEKRLKTPDLFKFPFFEAICWFVAKSLLETLKELKEDGFQPQSYLVQGVKALHTALKLWMKKELVSEHAFEIPDNVRPGHLIKELSKVIRAIEEENGKPVKSQGIPSVCPVSRPSNEASPPYHSRRKMRKLRDHNVRTPSNLDILELHTREVLKRLEMCPWEEDLLSSKLNGKFNKHLQPSSTVPEWRAKDNDLRLLLTNGRIIKDERQLFADRSLYTADSENEEDKKPTQNANMKTEQSSGREEAESQGSPKPLNRIFTSVRSELRSRPSEYSDGSDSEDSGPDCTALKINFATEDSESSGDEKKHEITSHFKEESDIVRNLLQKSQKPSRQEIPVKRECPTSTSTEEEAIQGMLSMAGLHYSSCLQRQIQSTDCSGEKNSLQDPSSCHGSNPEFRQLYRCNKPVEFGYHAKTEDQDLMTSSWNKQFDRTSRFNAQDLSRSQKHIKKESSSEINQKAQSRHCVDSNSSSIQNGKYTLNPSLVSCQISNGSLSPERPIGETSFSMPLHPTKRPASNPPPISNQATKGKRPKKGMATAKQRLGKILKLNRNGHARFFV.

The segment at 37 to 88 (PVYCVCRQPYDVNRFMIECDVCKDWFHGSCVGVEEHHAVDIDLYHCPDCAAL) adopts a PHD-type zinc-finger fold. Residues 97 to 114 (RRNWHRHDYTEVDDGSKP) are linker. The JmjC domain occupies 230–386 (FSDTKMSELV…MQLRCYEMEK (157 aa)). Residue threonine 279 participates in substrate binding. 2 residues coordinate Fe cation: histidine 282 and aspartate 284. Lysine 299 lines the substrate pocket. Histidine 354 lines the Fe cation pocket. Disordered stretches follow at residues 483 to 509 (VKSQ…HSRR), 599 to 670 (LYTA…PDCT), 710 to 729 (SQKP…TSTS), 818 to 854 (NAQD…SSSI), and 876 to 920 (SPER…MATA). Serine 604 carries the phosphoserine modification. A compositionally biased stretch (polar residues) spans 613–623 (TQNANMKTEQS). Residues 714–724 (SRQEIPVKREC) are compositionally biased toward basic and acidic residues.

Belongs to the JHDM1 histone demethylase family. JHDM1D subfamily. It depends on Fe(2+) as a cofactor.

Its subcellular location is the nucleus. The enzyme catalyses N(6),N(6)-dimethyl-L-lysyl(9)-[histone H3] + 2 2-oxoglutarate + 2 O2 = L-lysyl(9)-[histone H3] + 2 formaldehyde + 2 succinate + 2 CO2. It catalyses the reaction N(6),N(6)-dimethyl-L-lysyl(27)-[histone H3] + 2 2-oxoglutarate + 2 O2 = L-lysyl(27)-[histone H3] + 2 formaldehyde + 2 succinate + 2 CO2. The catalysed reaction is N(6),N(6)-dimethyl-L-lysyl(36)-[histone H3] + 2-oxoglutarate + O2 = N(6)-methyl-L-lysyl(36)-[histone H3] + formaldehyde + succinate + CO2. It carries out the reaction N(6)-methyl-L-lysyl(20)-[histone H4] + 2-oxoglutarate + O2 = L-lysyl(20)-[histone H4] + formaldehyde + succinate + CO2. Functionally, histone demethylase required for brain development. Specifically demethylates dimethylated 'Lys-9', 'Lys-27' and 'Lys-36' (H3K9me2, H3K27me2, H3K36me2, respectively) of histone H3 and monomethylated histone H4 'Lys-20' residue (H4K20Me1), thereby playing a central role in histone code. Specifically binds trimethylated 'Lys-4' of histone H3 (H3K4me3), affecting histone demethylase specificity: in presence of H3K4me3, it has no demethylase activity toward H3K9me2, while it has high activity toward H3K27me2. Demethylates H3K9me2 in absence of H3K4me3. Has activity toward H4K20Me1 only when nucleosome is used as a substrate and when not histone octamer is used as substrate. The sequence is that of Lysine-specific demethylase 7A (Kdm7a) from Mus musculus (Mouse).